Consider the following 286-residue polypeptide: Ribosomal RNA small subunit methyltransferase A (286 aa).

S-adenosyl-L-methionine is bound by residues Asn-28, Leu-30, Gly-55, Glu-77, Asp-103, and Asn-123.

This sequence belongs to the class I-like SAM-binding methyltransferase superfamily. rRNA adenine N(6)-methyltransferase family. RsmA subfamily.

The protein localises to the cytoplasm. It catalyses the reaction adenosine(1518)/adenosine(1519) in 16S rRNA + 4 S-adenosyl-L-methionine = N(6)-dimethyladenosine(1518)/N(6)-dimethyladenosine(1519) in 16S rRNA + 4 S-adenosyl-L-homocysteine + 4 H(+). Functionally, specifically dimethylates two adjacent adenosines (A1518 and A1519) in the loop of a conserved hairpin near the 3'-end of 16S rRNA in the 30S particle. May play a critical role in biogenesis of 30S subunits. This Bradyrhizobium sp. (strain BTAi1 / ATCC BAA-1182) protein is Ribosomal RNA small subunit methyltransferase A.